Here is a 540-residue protein sequence, read N- to C-terminus: DNA-(apurinic or apyrimidinic site) endonuclease (540 aa).

Residues asparagine 206 and glutamate 239 each coordinate Mg(2+). Residues asparagine 256 to lysine 276 are disordered. Residues lysine 263–lysine 276 show a composition bias toward basic and acidic residues. Residues aspartate 400, asparagine 402, aspartate 530, and histidine 531 each contribute to the Mg(2+) site. Histidine 531 acts as the Proton acceptor in catalysis.

The protein belongs to the DNA repair enzymes AP/ExoA family. Mg(2+) serves as cofactor. Requires Mn(2+) as cofactor. Post-translationally, may be proteolytically cleaved.

The protein localises to the mitochondrion. The catalysed reaction is Exonucleolytic cleavage in the 3'- to 5'-direction to yield nucleoside 5'-phosphates.. Multifunctional protein that plays a central role in mitochondrial DNA base excision repair pathway induced by oxidative stress. Has apurinic/apyrimidinic (AP) endonuclease activity towards double-stranded DNA (dsDNA). Has nucleotide incision repair (NIR) activity; acts on dsDNA with oxidized bases thymine glycol and 5,6-dihydro-2'-deoxyuridine. Has 3'-5' exonuclease; can use dsDNA templates with 3'-OH termini including blunt-end, gapped and mismatched 3'-recessed. Has 3'-phosphatase activity; cleaves 3'-phosphate from blunt, recessed and gapped dsDNA templates, followed by 3'-5' exonuclease activity. Has RNase H-like activity; cleaves RNA on 3'-recessed RNA-DNA duplex. Plays a role in merosome infection of host erythrocytes. The chain is DNA-(apurinic or apyrimidinic site) endonuclease from Plasmodium berghei (strain Anka).